The sequence spans 162 residues: MRNITNFLKTFLLWELLKGLKVTGKHFFTRKVTVQYPDEKTPISNRFRGLHALRRYENGEERCIACKLCEVVCPALAITINSTEREDGTRRTSSYEMDLFKCIFCGYCEESCPVDSIVETNILEYHFEERGENIMTKAKLLAIGDKYEAQIAADRLQDKDFR.

2 consecutive 4Fe-4S ferredoxin-type domains span residues 54 to 83 (RRYENGEERCIACKLCEVVCPALAITINST) and 93 to 122 (SSYEMDLFKCIFCGYCEESCPVDSIVETNI). The [4Fe-4S] cluster site is built by C63, C66, C69, C73, C102, C105, C108, and C112.

This sequence belongs to the complex I 23 kDa subunit family. In terms of assembly, NDH-1 is composed of 14 different subunits. Subunits NuoA, H, J, K, L, M, N constitute the membrane sector of the complex. The cofactor is [4Fe-4S] cluster.

The protein localises to the cell inner membrane. The catalysed reaction is a quinone + NADH + 5 H(+)(in) = a quinol + NAD(+) + 4 H(+)(out). In terms of biological role, NDH-1 shuttles electrons from NADH, via FMN and iron-sulfur (Fe-S) centers, to quinones in the respiratory chain. The immediate electron acceptor for the enzyme in this species is believed to be ubiquinone. Couples the redox reaction to proton translocation (for every two electrons transferred, four hydrogen ions are translocated across the cytoplasmic membrane), and thus conserves the redox energy in a proton gradient. This Francisella tularensis subsp. tularensis (strain FSC 198) protein is NADH-quinone oxidoreductase subunit I.